A 1002-amino-acid polypeptide reads, in one-letter code: UPF0182 protein alr1037 (1002 aa).

Transmembrane regions (helical) follow at residues 7-29 (FRLS…LGAE), 49-71 (RGVL…LALA), 123-145 (LRWL…VHYG), 178-200 (QVFS…LIYS), 202-224 (FFLR…YNWA), 258-280 (LLEL…TYLL), 300-319 (HLYG…YWLS), 339-361 (VVVQ…FYLL), and 382-404 (GAYL…YLIV).

This sequence belongs to the UPF0182 family.

The protein resides in the cell membrane. The protein is UPF0182 protein alr1037 of Nostoc sp. (strain PCC 7120 / SAG 25.82 / UTEX 2576).